The chain runs to 453 residues: Ribose 1,5-bisphosphate phosphokinase PhnN (453 aa).

The tract at residues Met-1–Leu-21 is disordered. Positions Met-1 to Pro-271 are unknown. A ribose 1,5-bisphosphokinase region spans residues His-272–Lys-453.

The protein in the C-terminal section; belongs to the ribose 1,5-bisphosphokinase family.

It carries out the reaction alpha-D-ribose 1,5-bisphosphate + ATP = 5-phospho-alpha-D-ribose 1-diphosphate + ADP. Its pathway is metabolic intermediate biosynthesis; 5-phospho-alpha-D-ribose 1-diphosphate biosynthesis; 5-phospho-alpha-D-ribose 1-diphosphate from D-ribose 5-phosphate (route II): step 3/3. Its function is as follows. Catalyzes the phosphorylation of ribose 1,5-bisphosphate to 5-phospho-D-ribosyl alpha-1-diphosphate (PRPP). In Janthinobacterium sp. (strain Marseille) (Minibacterium massiliensis), this protein is Ribose 1,5-bisphosphate phosphokinase PhnN (phnN).